Here is a 655-residue protein sequence, read N- to C-terminus: Sphingomyelin phosphodiesterase 3 (655 aa).

Topologically, residues 1 to 10 are cytoplasmic; sequence MVLYTTPFPN. Positions 11–31 form an intramembrane region, helical; sequence SCLSALHAVSWALIFPCYWLV. The Cytoplasmic portion of the chain corresponds to 32-64; that stretch reads DRLVASFIPTTYEKRQRADDPCYLQLFCTVLFT. 2 S-palmitoyl cysteine lipidation sites follow: Cys53 and Cys59. The helical intramembrane region spans 65 to 85; the sequence is PVYLALLVAALPFAFLGFIFW. At 86–655 the chain is on the cytoplasmic side; that stretch reads SPLQSARRPY…LMVSAGEEEA (570 aa). At Ser178 the chain carries Phosphoserine. Disordered stretches follow at residues 209–237 and 250–320; these read VEYKGDGGRHPSDEAANGPASGEQADGSL and GGRA…SNSK. Over residues 211-221 the composition is skewed to basic and acidic residues; it reads YKGDGGRHPSD. Position 289 is a phosphoserine (Ser289). Glu362 contacts Mg(2+). 2 S-palmitoyl cysteine lipidation sites follow: Cys395 and Cys396. His639 functions as the Proton acceptor in the catalytic mechanism.

It belongs to the neutral sphingomyelinase family. Mg(2+) serves as cofactor. In terms of processing, palmitoylated, palmitoylation-deficient proteins are targeted for lysosomal degradation. In brain sections, it is restricted to neurons and especially prominent in large cells, including Purkinje cells, pyramidal cells, neurons of the dentate gyrus granular layer, and neurons in the pontine nuclei. Also present in the hypothalamic nuclei, neurons in the piriform cortex, and nuclei of the brainstem (at protein level). Mainly expressed in brain and jejunum. Weakly or not expressed in heart, spleen, lung, liver, kidney and testis.

It is found in the golgi apparatus membrane. Its subcellular location is the cell membrane. The catalysed reaction is a sphingomyelin + H2O = phosphocholine + an N-acylsphing-4-enine + H(+). It carries out the reaction N-(15Z-tetracosenoyl)sphing-4-enine-1-phosphocholine + H2O = N-(15Z-tetracosenoyl)-sphing-4-enine + phosphocholine + H(+). The enzyme catalyses N-(tetracosanoyl)-sphing-4-enine-1-phosphocholine + H2O = N-tetracosanoyl-sphing-4-enine + phosphocholine + H(+). It catalyses the reaction an N-(acyl)-sphingosylphosphocholine + H2O = an N-acyl-sphingoid base + phosphocholine + H(+). The catalysed reaction is 1-hexadecanoyl-sn-glycero-3-phosphocholine + H2O = 1-hexadecanoyl-sn-glycerol + phosphocholine + H(+). It carries out the reaction 1-O-octadecyl-sn-glycero-3-phosphocholine + H2O = 1-O-octadecyl-sn-glycerol + phosphocholine + H(+). The enzyme catalyses a sphingosylphosphocholine + H2O = a sphingoid base + phosphocholine + H(+). It catalyses the reaction N-(hexadecanoyl)-sphing-4-enine-1-phosphocholine + H2O = N-hexadecanoylsphing-4-enine + phosphocholine + H(+). It participates in lipid metabolism; sphingolipid metabolism. Its activity is regulated as follows. Inhibited by nSMase inhibitor GW4869. Binding of anionic phospholipids (APLs) such as phosphatidylserine (PS) and phosphatidic acid (PA) increases enzymatic activity. Catalyzes the hydrolysis of sphingomyelin to form ceramide and phosphocholine. Ceramide mediates numerous cellular functions, such as apoptosis and growth arrest, and is capable of regulating these 2 cellular events independently. Also hydrolyzes sphingosylphosphocholine. Binds to anionic phospholipids (APLs) such as phosphatidylserine (PS) and phosphatidic acid (PA) that modulate enzymatic activity and subcellular location. Regulates the cell cycle by acting as a growth suppressor in confluent cells. Acts as a regulator of postnatal development and participates in bone and dentin mineralization. May be involved in IL-1-beta-induced JNK activation in hepatocytes. May act as a mediator in transcriptional regulation of NOS2/iNOS via the NF-kappa-B activation under inflammatory conditions. The sequence is that of Sphingomyelin phosphodiesterase 3 from Rattus norvegicus (Rat).